We begin with the raw amino-acid sequence, 176 residues long: Ribosome maturation factor RimM (176 aa).

Positions Asp-97–Phe-176 constitute a PRC barrel domain.

It belongs to the RimM family. As to quaternary structure, binds ribosomal protein uS19.

It localises to the cytoplasm. In terms of biological role, an accessory protein needed during the final step in the assembly of 30S ribosomal subunit, possibly for assembly of the head region. Essential for efficient processing of 16S rRNA. May be needed both before and after RbfA during the maturation of 16S rRNA. It has affinity for free ribosomal 30S subunits but not for 70S ribosomes. This chain is Ribosome maturation factor RimM, found in Shewanella frigidimarina (strain NCIMB 400).